The chain runs to 230 residues: Demethylmenaquinone methyltransferase (230 aa).

S-adenosyl-L-methionine is bound by residues threonine 62, aspartate 80, aspartate 100 to glycine 101, and serine 117.

This sequence belongs to the class I-like SAM-binding methyltransferase superfamily. MenG/UbiE family.

The catalysed reaction is a 2-demethylmenaquinol + S-adenosyl-L-methionine = a menaquinol + S-adenosyl-L-homocysteine + H(+). It participates in quinol/quinone metabolism; menaquinone biosynthesis; menaquinol from 1,4-dihydroxy-2-naphthoate: step 2/2. Its function is as follows. Methyltransferase required for the conversion of demethylmenaquinol (DMKH2) to menaquinol (MKH2). The protein is Demethylmenaquinone methyltransferase of Corynebacterium urealyticum (strain ATCC 43042 / DSM 7109).